Here is a 66-residue protein sequence, read N- to C-terminus: Large ribosomal subunit protein uL30 (66 aa).

It belongs to the universal ribosomal protein uL30 family. Part of the 50S ribosomal subunit.

This Chloroherpeton thalassium (strain ATCC 35110 / GB-78) protein is Large ribosomal subunit protein uL30.